A 197-amino-acid chain; its full sequence is Probable UbiX-like flavin prenyltransferase (197 aa).

FMN-binding positions include 9 to 11 (GAT), Ser36, 87 to 90 (SMKT), and Arg122.

The protein belongs to the UbiX/PAD1 family. YclB subfamily. As to quaternary structure, homododecamer.

It carries out the reaction dimethylallyl phosphate + FMNH2 = prenylated FMNH2 + phosphate. Flavin prenyltransferase that catalyzes the synthesis of the prenylated FMN cofactor (prenyl-FMN) for phenolic acid decarboxylase C. Involved in the decarboxylation and detoxification of phenolic derivatives under both aerobic and anaerobic conditions. The chain is Probable UbiX-like flavin prenyltransferase (ecdB) from Escherichia coli.